We begin with the raw amino-acid sequence, 121 residues long: uncharacterized protein (121 aa).

An ATP-binding site is contributed by 77 to 84 (AALSFGKT).

This is an uncharacterized protein from Saccharomyces cerevisiae (strain ATCC 204508 / S288c) (Baker's yeast).